A 157-amino-acid chain; its full sequence is 2-C-methyl-D-erythritol 2,4-cyclodiphosphate synthase (157 aa).

Residues Asp-8 and His-10 each coordinate a divalent metal cation. Residues 8–10 and 34–35 each bind 4-CDP-2-C-methyl-D-erythritol 2-phosphate; these read DVH and HS. His-42 is an a divalent metal cation binding site. Residues 56 to 58, 61 to 65, 132 to 135, Phe-139, and Arg-142 each bind 4-CDP-2-C-methyl-D-erythritol 2-phosphate; these read DIG, FPDTD, and TTTE.

It belongs to the IspF family. As to quaternary structure, homotrimer. The cofactor is a divalent metal cation.

The enzyme catalyses 4-CDP-2-C-methyl-D-erythritol 2-phosphate = 2-C-methyl-D-erythritol 2,4-cyclic diphosphate + CMP. The protein operates within isoprenoid biosynthesis; isopentenyl diphosphate biosynthesis via DXP pathway; isopentenyl diphosphate from 1-deoxy-D-xylulose 5-phosphate: step 4/6. In terms of biological role, involved in the biosynthesis of isopentenyl diphosphate (IPP) and dimethylallyl diphosphate (DMAPP), two major building blocks of isoprenoid compounds. Catalyzes the conversion of 4-diphosphocytidyl-2-C-methyl-D-erythritol 2-phosphate (CDP-ME2P) to 2-C-methyl-D-erythritol 2,4-cyclodiphosphate (ME-CPP) with a corresponding release of cytidine 5-monophosphate (CMP). The sequence is that of 2-C-methyl-D-erythritol 2,4-cyclodiphosphate synthase from Pseudomonas putida (strain W619).